Here is a 179-residue protein sequence, read N- to C-terminus: Large ribosomal subunit protein uL5 (179 aa).

The protein belongs to the universal ribosomal protein uL5 family. As to quaternary structure, part of the 50S ribosomal subunit; part of the 5S rRNA/L5/L18/L25 subcomplex. Contacts the 5S rRNA and the P site tRNA. Forms a bridge to the 30S subunit in the 70S ribosome.

This is one of the proteins that bind and probably mediate the attachment of the 5S RNA into the large ribosomal subunit, where it forms part of the central protuberance. In the 70S ribosome it contacts protein S13 of the 30S subunit (bridge B1b), connecting the 2 subunits; this bridge is implicated in subunit movement. Contacts the P site tRNA; the 5S rRNA and some of its associated proteins might help stabilize positioning of ribosome-bound tRNAs. The chain is Large ribosomal subunit protein uL5 from Desulforapulum autotrophicum (strain ATCC 43914 / DSM 3382 / VKM B-1955 / HRM2) (Desulfobacterium autotrophicum).